A 314-amino-acid chain; its full sequence is uncharacterized protein (314 aa).

This sequence belongs to the carbohydrate kinase PfkB family.

This is an uncharacterized protein from Buchnera aphidicola subsp. Schizaphis graminum (strain Sg).